A 518-amino-acid chain; its full sequence is GMP synthase [glutamine-hydrolyzing] (518 aa).

The Glutamine amidotransferase type-1 domain maps to 8–201 (TVLIIDFGSQ…VLKISNLKGN (194 aa)). Cys-85 serves as the catalytic Nucleophile. Active-site residues include His-175 and Glu-177. One can recognise a GMPS ATP-PPase domain in the interval 202-393 (WSMASYREQT…LGLPEQFIGR (192 aa)). 229-235 (SGGVDSS) is a binding site for ATP.

Homodimer.

It catalyses the reaction XMP + L-glutamine + ATP + H2O = GMP + L-glutamate + AMP + diphosphate + 2 H(+). Its pathway is purine metabolism; GMP biosynthesis; GMP from XMP (L-Gln route): step 1/1. In terms of biological role, catalyzes the synthesis of GMP from XMP. This Bartonella henselae (strain ATCC 49882 / DSM 28221 / CCUG 30454 / Houston 1) (Rochalimaea henselae) protein is GMP synthase [glutamine-hydrolyzing].